The sequence spans 448 residues: uncharacterized protein (448 aa).

As to expression, component of the acid-insoluble and acid-soluble organic matrix of the aragonitic skeleton (at protein level).

The protein localises to the secreted. This is an uncharacterized protein from Acropora millepora (Staghorn coral).